The chain runs to 382 residues: B3 domain-containing protein Os03g0622100 (382 aa).

The segment at residues cysteine 29–serine 123 is a DNA-binding region (TF-B3 1). Basic and acidic residues-rich tracts occupy residues arginine 136 to glycine 158 and glutamine 193 to glycine 202. Residues arginine 136–arginine 222 form a disordered region. Positions aspartate 203–aspartate 218 are enriched in acidic residues. Residues lysine 261 to arginine 363 constitute a DNA-binding region (TF-B3 2).

The protein localises to the nucleus. The chain is B3 domain-containing protein Os03g0622100 from Oryza sativa subsp. japonica (Rice).